Consider the following 441-residue polypeptide: Diuretic hormone receptor (441 aa).

N-linked (GlcNAc...) asparagine glycans are attached at residues N99, N107, and N112. The helical transmembrane segment at 135-158 (FVFFVGFCLSLVAIAVAIWIFLYF) threads the bilayer. Residues 159 to 166 (KDLRCLRN) are Cytoplasmic-facing. A helical membrane pass occupies residues 167–187 (TIHTNLMATYICNDATWIISA). Residues 188–194 (VVQEYVE) lie on the Extracellular side of the membrane. The helical transmembrane segment at 195–224 (NGGLCSVLAVLMHYFYLTNFFWMFVEGLYL) threads the bilayer. At 225 to 238 (FLLVVATFTGEKVK) the chain is on the cytoplasmic side. Residues 239–260 (LQIYIIIGWGIPGVIVVTWAII) traverse the membrane as a helical segment. Topologically, residues 261-291 (KHLGKTAPDNAGESHPMVLLIKHCPWMAEDY) are extracellular. Residues 292–315 (FDWIHQAPVITVLAVNLVFLFSIM) traverse the membrane as a helical segment. Topologically, residues 316 to 338 (WVLITKLQSANTAETQQYRKATK) are cytoplasmic. The chain crosses the membrane as a helical span at residues 339-357 (ALLVLFPLLGITYILMMQG). Residues 358-371 (PMDGVAGHVFRNAQ) lie on the Extracellular side of the membrane. Residues 372–391 (ALLLSLQGFTVALFYCFLNT) traverse the membrane as a helical segment. Topologically, residues 392–441 (EVQNTLRHRMSRWRETRTVGGGRRYTLSGHSKDWSPRSRTESIRCLQHRS) are cytoplasmic.

It belongs to the G-protein coupled receptor 2 family. As to expression, expressed in Malpighian tubules.

It is found in the cell membrane. Its function is as follows. Receptor for the insect diurectic hormone. The activity of this receptor is mediated by G proteins which activate adenylyl cyclase. In Acheta domesticus (House cricket), this protein is Diuretic hormone receptor.